Reading from the N-terminus, the 304-residue chain is uncharacterized protein (304 aa).

NAD(+)-binding positions include 136-137, 215-217, and Asp241; these read GI and VGR. Residue Arg217 is part of the active site. Glu246 is a catalytic residue. Residue His265 is the Proton donor of the active site. 265–268 contributes to the NAD(+) binding site; the sequence is HTAN.

Belongs to the D-isomer specific 2-hydroxyacid dehydrogenase family.

This is an uncharacterized protein from Corynebacterium melassecola.